The chain runs to 306 residues: Putative HTH-type transcriptional regulatory protein Mhun_2548 (306 aa).

An HTH cro/C1-type domain is found at Leu132–Ile189. Residues Leu143–Ala162 constitute a DNA-binding region (H-T-H motif).

This is Putative HTH-type transcriptional regulatory protein Mhun_2548 from Methanospirillum hungatei JF-1 (strain ATCC 27890 / DSM 864 / NBRC 100397 / JF-1).